The chain runs to 329 residues: Taste receptor type 2 member 102 (329 aa).

At Met1 to Asn9 the chain is on the extracellular side. The chain crosses the membrane as a helical span at residues Phe10 to Val30. The Cytoplasmic segment spans residues Leu31–Asp47. A helical membrane pass occupies residues Lys48–Phe68. Topologically, residues Lys69 to Ile85 are extracellular. A helical membrane pass occupies residues Ile86–Tyr108. The Cytoplasmic segment spans residues Leu109–Gln129. The helical transmembrane segment at Leu130–Met150 threads the bilayer. Over Leu151–Asn181 the chain is Extracellular. A glycan (N-linked (GlcNAc...) asparagine) is linked at Asn161. The chain crosses the membrane as a helical span at residues Met182–Phe202. The Cytoplasmic segment spans residues Ser203–Arg231. A helical transmembrane segment spans residues Ile232 to Ile252. The Extracellular segment spans residues Ala253 to Asp262. A helical transmembrane segment spans residues Ile263 to Gly283. The Cytoplasmic portion of the chain corresponds to Asn284–Arg329.

This sequence belongs to the G-protein coupled receptor T2R family.

Its subcellular location is the membrane. Putative taste receptor which may play a role in the perception of bitterness. The chain is Taste receptor type 2 member 102 from Mus musculus (Mouse).